A 278-amino-acid chain; its full sequence is Bicarbonate transport system permease protein CmpB (278 aa).

The next 7 helical transmembrane spans lie at 24 to 44 (LDGI…WQIF), 93 to 113 (VAQG…LVGL), 124 to 144 (LFQF…LVAF), 151 to 171 (AIFV…AEGV), 196 to 216 (VVLP…IGLS), 217 to 237 (WLAI…GFFI), and 249 to 269 (IILA…FVAW). In terms of domain architecture, ABC transmembrane type-1 spans 86 to 267 (TIASLTRVAQ…AVGLLLDRFV (182 aa)).

It belongs to the binding-protein-dependent transport system permease family. The complex is composed of two ATP-binding proteins (CmpC and CmpD), a transmembrane protein (CmpB) and a solute-binding protein (CmpA).

The protein resides in the cell inner membrane. In terms of biological role, part of the ABC transporter complex CmpABCD involved in bicarbonate transport. Probably responsible for the translocation of the substrate across the membrane. In Synechococcus sp. (strain ATCC 27144 / PCC 6301 / SAUG 1402/1) (Anacystis nidulans), this protein is Bicarbonate transport system permease protein CmpB (cmpB).